Here is a 207-residue protein sequence, read N- to C-terminus: Ribonuclease HII (207 aa).

The 188-residue stretch at Gln20–Glu207 folds into the RNase H type-2 domain. Asp26, Glu27, and Asp118 together coordinate a divalent metal cation.

It belongs to the RNase HII family. Mn(2+) is required as a cofactor. The cofactor is Mg(2+).

Its subcellular location is the cytoplasm. The catalysed reaction is Endonucleolytic cleavage to 5'-phosphomonoester.. In terms of biological role, endonuclease that specifically degrades the RNA of RNA-DNA hybrids. In Aliivibrio fischeri (strain ATCC 700601 / ES114) (Vibrio fischeri), this protein is Ribonuclease HII.